A 188-amino-acid polypeptide reads, in one-letter code: Putative manganese efflux pump MntP (188 aa).

6 helical membrane-spanning segments follow: residues 3-23 (FYALLLIALGMSMDAFAVALA), 35-55 (IAATALVFGTVEALTPLAGWV), 63-83 (FISEWDHWVAFVLLGGLGLKM), 104-126 (WMTVLTAFGTSIDSMIVGVGLAF), 140-160 (MATTVMVAVGLTAGRALGVLF), and 167-187 (AGGLVLIAIGTWTLLSHLGLI).

Belongs to the MntP (TC 9.B.29) family.

The protein localises to the cell inner membrane. Probably functions as a manganese efflux pump. The protein is Putative manganese efflux pump MntP of Neisseria meningitidis serogroup B (strain ATCC BAA-335 / MC58).